Consider the following 198-residue polypeptide: N-acetyltransferase 9-like protein (198 aa).

An N-acetyltransferase domain is found at 34–178 (EEIRRLTGSE…KEITMELPGE (145 aa)).

It belongs to the acetyltransferase family. GNAT subfamily.

This is N-acetyltransferase 9-like protein from Caenorhabditis briggsae.